A 173-amino-acid chain; its full sequence is Inorganic pyrophosphatase (173 aa).

The substrate site is built by Lys-28, Arg-42, and Tyr-54. Positions 64, 69, and 101 each coordinate Mg(2+). Tyr-140 is a substrate binding site.

It belongs to the PPase family. In terms of assembly, homohexamer. Requires Mg(2+) as cofactor.

The protein resides in the cytoplasm. It catalyses the reaction diphosphate + H2O = 2 phosphate + H(+). Catalyzes the hydrolysis of inorganic pyrophosphate (PPi) forming two phosphate ions. In Helicobacter pylori (strain J99 / ATCC 700824) (Campylobacter pylori J99), this protein is Inorganic pyrophosphatase.